A 554-amino-acid chain; its full sequence is MTPLIFVTGGVVSSLGKGIAAASLAAILEARGLKVTMMKLDPYINVDPGTMSPFQHGEVYVTDDGAETDLDLGHYERFVRTRLSRKNSVTTGRIYENVIRKERRGDYLGATVQVIPHITDEIRRCIDEATEGYDVALVEIGGTVGDIESLPFLEAIRQVRTERGPEKALFMHLTLVPYIGAAGELKTKPTQHSVKELRSIGIQPDVLLCRSEQAVPDSERRKIAQFTNVSERAVISVPDVDVLYRIPSGLHAQGLDEIVVNQLKLADKAGPVDLSMWEDAVDATLHPLDEVTIAVVGKYVDHQDAYKSVGEALKHGGLRQRTKVNLKWLEAQDLEGTDMAALADVDGILVPGGFGDRGFEGKVLTSKFAREQQVPYFGICYGMQAAVVDYARNVVGLEGANSTENDRQSPNPVIGLITEWRTATGDVEKRDDKSDLGGTMRLGLQEQRLKPGTLARELYGKDVVAERHRHRYEFNNRYRTQLEDAGLVIAGKSMDDTLVEVVELPRDAHPWFLACQAHPEFLSTPRDGHPLFIGFIRAARERKAGGKLLSEARA.

The interval 1–265 is amidoligase domain; that stretch reads MTPLIFVTGG…DEIVVNQLKL (265 aa). Position 13 (Ser13) interacts with CTP. Ser13 contacts UTP. 14–19 is a binding site for ATP; the sequence is SLGKGI. Mg(2+) contacts are provided by Asp71 and Glu139. Residues 146 to 148, 186 to 191, and Lys222 contribute to the CTP site; these read DIE and KTKPTQ. Residues 186 to 191 and Lys222 contribute to the UTP site; that span reads KTKPTQ. The Glutamine amidotransferase type-1 domain occupies 292–545; sequence TIAVVGKYVD…IRAARERKAG (254 aa). Gly353 is an L-glutamine binding site. Catalysis depends on Cys380, which acts as the Nucleophile; for glutamine hydrolysis. L-glutamine is bound by residues 381–384, Glu404, and Arg471; that span reads YGMQ. Residues His518 and Glu520 contribute to the active site.

The protein belongs to the CTP synthase family. As to quaternary structure, homotetramer.

It carries out the reaction UTP + L-glutamine + ATP + H2O = CTP + L-glutamate + ADP + phosphate + 2 H(+). The enzyme catalyses L-glutamine + H2O = L-glutamate + NH4(+). It catalyses the reaction UTP + NH4(+) + ATP = CTP + ADP + phosphate + 2 H(+). It participates in pyrimidine metabolism; CTP biosynthesis via de novo pathway; CTP from UDP: step 2/2. Allosterically activated by GTP, when glutamine is the substrate; GTP has no effect on the reaction when ammonia is the substrate. The allosteric effector GTP functions by stabilizing the protein conformation that binds the tetrahedral intermediate(s) formed during glutamine hydrolysis. Inhibited by the product CTP, via allosteric rather than competitive inhibition. Catalyzes the ATP-dependent amination of UTP to CTP with either L-glutamine or ammonia as the source of nitrogen. Regulates intracellular CTP levels through interactions with the four ribonucleotide triphosphates. This chain is CTP synthase, found in Stenotrophomonas maltophilia (strain K279a).